A 56-amino-acid polypeptide reads, in one-letter code: Small ribosomal subunit protein uS14 (56 aa).

Residues C21, C24, C39, and C42 each contribute to the Zn(2+) site.

Belongs to the universal ribosomal protein uS14 family. Zn(2+) serves as cofactor.

In Griffithsia japonica (Red alga), this protein is Small ribosomal subunit protein uS14 (RPS29).